Here is a 334-residue protein sequence, read N- to C-terminus: N-acetylmuramoyl-L-alanine amidase sle1 (334 aa).

Residues 1-25 form the signal peptide; the sequence is MQKKVIAAIIGTSAISAVAATQANA. The 44-residue stretch at 27–70 folds into the LysM 1 domain; it reads TTHTVKPGESVWAISNKYGISIAKLKSLNNLTSNLIFPNQVLKV. Over residues 71–86 the composition is skewed to low complexity; that stretch reads SGSSNSTSNSSRPSTN. The disordered stretch occupies residues 71–90; sequence SGSSNSTSNSSRPSTNSGGG. LysM domains are found at residues 91-134 and 158-201; these read SYYT…KLKV. The Peptidase C51 domain occupies 210 to 334; the sequence is GSATTTNRGY…YQVNNYRYIH (125 aa).

Its subcellular location is the secreted. The protein localises to the cell surface. The catalysed reaction is Hydrolyzes the link between N-acetylmuramoyl residues and L-amino acid residues in certain cell-wall glycopeptides.. In terms of biological role, peptidoglycan hydrolase involved in the splitting of the septum during cell division. The polypeptide is N-acetylmuramoyl-L-alanine amidase sle1 (sle1) (Staphylococcus aureus (strain USA300)).